The chain runs to 592 residues: Aspartate--tRNA ligase (592 aa).

Residue E171 coordinates L-aspartate. Positions 195-198 (QLFK) are aspartate. L-aspartate is bound at residue R217. Residues 217–219 (RDE) and Q226 contribute to the ATP site. Residue H448 coordinates L-aspartate. E482 contributes to the ATP binding site. R489 is a binding site for L-aspartate. Residue 534–537 (GLDR) participates in ATP binding.

It belongs to the class-II aminoacyl-tRNA synthetase family. Type 1 subfamily. As to quaternary structure, homodimer.

The protein localises to the cytoplasm. The catalysed reaction is tRNA(Asp) + L-aspartate + ATP = L-aspartyl-tRNA(Asp) + AMP + diphosphate. Catalyzes the attachment of L-aspartate to tRNA(Asp) in a two-step reaction: L-aspartate is first activated by ATP to form Asp-AMP and then transferred to the acceptor end of tRNA(Asp). The protein is Aspartate--tRNA ligase of Vibrio parahaemolyticus serotype O3:K6 (strain RIMD 2210633).